The chain runs to 234 residues: Enolase-phosphatase E1 (234 aa).

Mg(2+) is bound by residues Asp-10 and Glu-12. Substrate-binding positions include 125-126 and Lys-162; that span reads SS. Asp-188 contributes to the Mg(2+) binding site.

It belongs to the HAD-like hydrolase superfamily. MasA/MtnC family. As to quaternary structure, monomer. Requires Mg(2+) as cofactor.

Its subcellular location is the cytoplasm. The protein localises to the nucleus. It catalyses the reaction 5-methylsulfanyl-2,3-dioxopentyl phosphate + H2O = 1,2-dihydroxy-5-(methylsulfanyl)pent-1-en-3-one + phosphate. Its pathway is amino-acid biosynthesis; L-methionine biosynthesis via salvage pathway; L-methionine from S-methyl-5-thio-alpha-D-ribose 1-phosphate: step 3/6. It functions in the pathway amino-acid biosynthesis; L-methionine biosynthesis via salvage pathway; L-methionine from S-methyl-5-thio-alpha-D-ribose 1-phosphate: step 4/6. Its function is as follows. Bifunctional enzyme that catalyzes the enolization of 2,3-diketo-5-methylthiopentyl-1-phosphate (DK-MTP-1-P) into the intermediate 2-hydroxy-3-keto-5-methylthiopentenyl-1-phosphate (HK-MTPenyl-1-P), which is then dephosphorylated to form the acireductone 1,2-dihydroxy-3-keto-5-methylthiopentene (DHK-MTPene). This chain is Enolase-phosphatase E1 (utr4), found in Neurospora crassa (strain ATCC 24698 / 74-OR23-1A / CBS 708.71 / DSM 1257 / FGSC 987).